A 505-amino-acid polypeptide reads, in one-letter code: Putative thymidine phosphorylase (505 aa).

The protein belongs to the thymidine/pyrimidine-nucleoside phosphorylase family. Type 2 subfamily.

It catalyses the reaction thymidine + phosphate = 2-deoxy-alpha-D-ribose 1-phosphate + thymine. In Tolumonas auensis (strain DSM 9187 / NBRC 110442 / TA 4), this protein is Putative thymidine phosphorylase.